The following is a 31-amino-acid chain: YGGFMTSEKSQTPLVTLFKNAIIKNAHKKGQ.

Belongs to the POMC family.

The protein localises to the secreted. Beta-endorphin and Met-enkephalin are endogenous opiates. The polypeptide is Beta-endorphin (POMC) (Camelus dromedarius (Dromedary)).